A 62-amino-acid chain; its full sequence is Large ribosomal subunit protein bL28 (62 aa).

This sequence belongs to the bacterial ribosomal protein bL28 family.

The protein is Large ribosomal subunit protein bL28 of Helicobacter pylori (strain HPAG1).